The primary structure comprises 291 residues: uncharacterized protein (291 aa).

This sequence belongs to the PhyH family.

This is an uncharacterized protein from Mycobacterium bovis (strain ATCC BAA-935 / AF2122/97).